A 571-amino-acid polypeptide reads, in one-letter code: Leiomodin-3 (571 aa).

3 disordered regions span residues 1-29, 46-67, and 91-228; these read MSGHSRNSEQEDTLSEELDEDELLANLSP, PHLPVGMIQKDQTDKAPTGNFN, and PVSF…AKLD. Over residues 10–23 the composition is skewed to acidic residues; it reads QEDTLSEELDEDEL. The span at 94–105 shows a compositional bias: polar residues; the sequence is FVQSEKNTQNQR. Residues 119–134 are compositionally biased toward basic and acidic residues; that stretch reads LKEKLNSEILAKKRES. Acidic residues predominate over residues 142-179; it reads EAEDDDEDEEEEEEDDEDEEEEEEDEEDDEGEEDEDGE. A compositionally biased stretch (basic and acidic residues) spans 180 to 192; the sequence is QANREKNDAKEQI. The segment covering 193–204 has biased composition (polar residues); that stretch reads HNNPGTYQQLAT. Residues 206-228 show a composition bias toward basic and acidic residues; the sequence is TAHEQKDTSETKEKGEKKIAKLD. The stretch at 397-436 forms a coiled coil; sequence VTNLLTRNQDKRRQKRQEEQQQQQLKEQRKLIAMLENGLG. Positions 545–564 constitute a WH2 domain; it reads PRDQLLNDIRHSNVAYLKPV.

The protein belongs to the tropomodulin family. May interact with tropomyosin alpha (TPM1/2) N-terminus. Interacts with KLHL40; leading to stabilization. In terms of processing, ubiquitinated, leading to its degradation. Interaction with KLHL40 negatively regulates ubiquitination and degradation. As to expression, skeletal muscle and heart-specific (at protein level).

The protein resides in the cytoplasm. Its subcellular location is the myofibril. It localises to the sarcomere. It is found in the a band. The protein localises to the m line. The protein resides in the cytoskeleton. In terms of biological role, essential for the organization of sarcomeric actin thin filaments in skeletal muscle. Increases the rate of actin polymerization. The chain is Leiomodin-3 from Mus musculus (Mouse).